The primary structure comprises 119 residues: Autophagy-related protein 8B (119 aa).

A lipid anchor (Phosphatidylethanolamine amidated glycine) is attached at G117. Residues 118–119 (LL) constitute a propeptide, removed in mature form.

The protein belongs to the ATG8 family. Interacts with ATG4. The C-terminal 2 residues are removed by ATG4 to expose Gly-117 at the C-terminus. The C-terminal Gly is then amidated with phosphatidylethanolamine by an activating system similar to that for ubiquitin.

The protein resides in the cytoplasmic vesicle. It localises to the autophagosome membrane. Its subcellular location is the vacuole membrane. It is found in the cytoplasm. The protein localises to the cytoskeleton. Functionally, ubiquitin-like modifier involved in autophagosomes formation. May mediate the delivery of the autophagosomes to the vacuole via the microtubule cytoskeleton. In Oryza sativa subsp. indica (Rice), this protein is Autophagy-related protein 8B (ATG8B).